The following is a 931-amino-acid chain: Aftiphilin (931 aa).

A disordered region spans residues 1-49 (MEPDIIRMYSSSPPPLDNGAEDDEEDEFGEFGGFSEVSPSGVGFVDFDT). The segment covering 19–29 (GAEDDEEDEFG) has biased composition (acidic residues). The WXXF motif 1 signature appears at 28–31 (FGEF). Residues 33-45 (GFSEVSPSGVGFV) show a composition bias toward low complexity. S151 is modified (phosphoserine). Polar residues predominate over residues 371–381 (SVKTSDVNEIG). The interval 371–454 (SVKTSDVNEI…PFVTSTQDSM (84 aa)) is disordered. S395 is modified (phosphoserine). A WXXF motif 2 motif is present at residues 433-436 (FGDF). Residues 439 to 454 (ANGTTPPFVTSTQDSM) are compositionally biased toward polar residues. The WXXF motif 3 signature appears at 476 to 479 (FGEF). Disordered stretches follow at residues 494 to 561 (TESD…SSAG) and 599 to 636 (WQSQRTDETMGTLGTPKMHSVSSAASKGAVASGHLQEP). Residues 516–530 (GGKDSKPDSKLKNGQ) are compositionally biased toward basic and acidic residues. T613 carries the post-translational modification Phosphothreonine. Low complexity predominate over residues 618–631 (SVSSAASKGAVASG). The short motif at 712 to 714 (YQW) is the CLTCL1/Clathrin-binding element. A clathrin-binding region spans residues 821–825 (LLNLD).

In terms of assembly, self-associates. Interacts with GGA1 (via GAE domain). Interacts with GGA3 (via GAE domain), AP1G1 (via GAE domain) and AP1G2 (via GAE domain). Component of the aftiphilin/p200/gamma-synergin complex, at least composed of AFTPH/aftiphilin, HEATR5B/p200a and SYNRG/gamma-synergin, which plays a role in the AP1G1/AP-1-mediated protein trafficking from early to recycling endosomes. Within the complex interacts with HEATR5B/p200a and SYNRG/gamma-synergin; the interactions are direct. Interacts with AP1G1/AP-1; the interaction is required to recruit AFTPH/aftiphilin to the perinuclear region of the cell. Interacts with CLTCL1/Clathrin.

It is found in the cytoplasm. Its subcellular location is the perinuclear region. The protein localises to the cytoplasmic vesicle. It localises to the clathrin-coated vesicle. Its function is as follows. Component of clathrin-coated vesicles. Component of the aftiphilin/p200/gamma-synergin complex, which plays roles in AP1G1/AP-1-mediated protein trafficking including the trafficking of transferrin from early to recycling endosomes, and the membrane trafficking of furin and the lysosomal enzyme cathepsin D between the trans-Golgi network (TGN) and endosomes. The sequence is that of Aftiphilin (Aftph) from Mus musculus (Mouse).